The following is a 72-amino-acid chain: Protein kish-A (72 aa).

The signal sequence occupies residues 1–26 (MSAIFNFQSLLTVILLLICTCAYIRS). At 27–53 (LAPSILDRNKTGLLGIFWKCARIGERK) the chain is on the extracellular side. N-linked (GlcNAc...) asparagine glycosylation occurs at Asn35. The chain crosses the membrane as a helical span at residues 54 to 71 (SPYVAICCIVMAFSILFI). Position 72 (Gln72) is a topological domain, cytoplasmic.

It belongs to the KISH family.

The protein resides in the golgi apparatus membrane. Its function is as follows. Involved in the early part of the secretory pathway. The polypeptide is Protein kish-A (Tmem167a) (Mus musculus (Mouse)).